Consider the following 164-residue polypeptide: 3-isopropylmalate dehydratase small subunit 1 (164 aa).

This sequence belongs to the LeuD family. LeuD type 2 subfamily. Heterodimer of LeuC and LeuD.

The catalysed reaction is (2R,3S)-3-isopropylmalate = (2S)-2-isopropylmalate. It functions in the pathway amino-acid biosynthesis; L-leucine biosynthesis; L-leucine from 3-methyl-2-oxobutanoate: step 2/4. Its function is as follows. Catalyzes the isomerization between 2-isopropylmalate and 3-isopropylmalate, via the formation of 2-isopropylmaleate. The chain is 3-isopropylmalate dehydratase small subunit 1 (leuD1) from Pyrococcus abyssi (strain GE5 / Orsay).